Here is a 464-residue protein sequence, read N- to C-terminus: MATENVGTVVQIIGPVIDIRFERGKLPSIYNAIKINSEGIDIVAEVMQYTGNDTVRCVSMNSTDGLKRGMKAVDTGEPIKVPVGKEVLGRVFNVLGEPIDGKGDVKATTYLPIHREAPGLDEQKPVTEILETGIKVIDLLAPYAKGGKIGLFGGAGVGKTVLIMELIRNIATEHGGYSVFTGVGERSREGNDLWNEMNESGVIEKTALVFGQMNEPPGSRMRVGLTGLTMAEYFRDELGQDVLLFIDNIFRFIQAGSEVSALLGRIPSAVGYQPTLATEMGALQERITSTKKGSITSVQAVYVPADDLTDPAPATTFTHLDATTVLSRHIVEQGIYPAVDPLDSTSRVLDRRIVGDEHYTVARKVQEILQRYKELQDIIAILGLDELSEEDKLIVFRARKIQRFLSQPFFVAEAYTGYKGKFVRIKDTIRGFKEIIEGKMDDIPEAAFYMAGTIDEVYERAKKM.

An ATP-binding site is contributed by 153–160 (GGAGVGKT).

This sequence belongs to the ATPase alpha/beta chains family. In terms of assembly, F-type ATPases have 2 components, CF(1) - the catalytic core - and CF(0) - the membrane proton channel. CF(1) has five subunits: alpha(3), beta(3), gamma(1), delta(1), epsilon(1). CF(0) has three main subunits: a(1), b(2) and c(9-12). The alpha and beta chains form an alternating ring which encloses part of the gamma chain. CF(1) is attached to CF(0) by a central stalk formed by the gamma and epsilon chains, while a peripheral stalk is formed by the delta and b chains.

The protein localises to the cell membrane. It carries out the reaction ATP + H2O + 4 H(+)(in) = ADP + phosphate + 5 H(+)(out). Its function is as follows. Produces ATP from ADP in the presence of a proton gradient across the membrane. The catalytic sites are hosted primarily by the beta subunits. The chain is ATP synthase subunit beta from Acetivibrio thermocellus (strain ATCC 27405 / DSM 1237 / JCM 9322 / NBRC 103400 / NCIMB 10682 / NRRL B-4536 / VPI 7372) (Clostridium thermocellum).